We begin with the raw amino-acid sequence, 272 residues long: tRNA pseudouridine synthase B (272 aa).

Aspartate 38 serves as the catalytic Nucleophile.

The protein belongs to the pseudouridine synthase TruB family. Type 1 subfamily.

The catalysed reaction is uridine(55) in tRNA = pseudouridine(55) in tRNA. Functionally, responsible for synthesis of pseudouridine from uracil-55 in the psi GC loop of transfer RNAs. In Campylobacter jejuni subsp. jejuni serotype O:2 (strain ATCC 700819 / NCTC 11168), this protein is tRNA pseudouridine synthase B.